Consider the following 58-residue polypeptide: Putative transcript Y 13 protein (58 aa).

Residues 17–37 (LLGWDLNLSLFLGLCLMLLLA) form a helical membrane-spanning segment.

The protein resides in the membrane. The polypeptide is Putative transcript Y 13 protein (TTTY13) (Homo sapiens (Human)).